Reading from the N-terminus, the 100-residue chain is Small ribosomal subunit protein uS14c (100 aa).

This sequence belongs to the universal ribosomal protein uS14 family. As to quaternary structure, part of the 30S ribosomal subunit.

It localises to the plastid. The protein localises to the chloroplast. Binds 16S rRNA, required for the assembly of 30S particles. This Phalaenopsis aphrodite subsp. formosana (Moth orchid) protein is Small ribosomal subunit protein uS14c.